We begin with the raw amino-acid sequence, 213 residues long: Thymidylate kinase (213 aa).

Residue 10-17 (GLEGAGKT) coordinates ATP.

This sequence belongs to the thymidylate kinase family.

It carries out the reaction dTMP + ATP = dTDP + ADP. Its function is as follows. Phosphorylation of dTMP to form dTDP in both de novo and salvage pathways of dTTP synthesis. The protein is Thymidylate kinase of Escherichia coli O1:K1 / APEC.